A 174-amino-acid chain; its full sequence is Cytochrome c-type biogenesis protein CcmE (174 aa).

Over 1–8 (MNPRRKSR) the chain is Cytoplasmic. A helical; Signal-anchor for type II membrane protein membrane pass occupies residues 9-29 (LSVVLFILLGISVASALVLYA). At 30-174 (LRQNIDLFYT…QEKQFKEGNQ (145 aa)) the chain is on the periplasmic side. Heme-binding residues include His131 and Tyr135. Residues 149–174 (KPMGISDLKNESDRDRQEKQFKEGNQ) form a disordered region. A compositionally biased stretch (basic and acidic residues) spans 156–174 (LKNESDRDRQEKQFKEGNQ).

It belongs to the CcmE/CycJ family.

The protein resides in the cell inner membrane. Heme chaperone required for the biogenesis of c-type cytochromes. Transiently binds heme delivered by CcmC and transfers the heme to apo-cytochromes in a process facilitated by CcmF and CcmH. This chain is Cytochrome c-type biogenesis protein CcmE, found in Histophilus somni (strain 2336) (Haemophilus somnus).